We begin with the raw amino-acid sequence, 188 residues long: dCTP deaminase (188 aa).

Residues K111–R116, T135–E137, Q156, Y170, and Q180 contribute to the dCTP site. Residue E137 is the Proton donor/acceptor of the active site.

This sequence belongs to the dCTP deaminase family. As to quaternary structure, homotrimer.

The enzyme catalyses dCTP + H2O + H(+) = dUTP + NH4(+). It functions in the pathway pyrimidine metabolism; dUMP biosynthesis; dUMP from dCTP (dUTP route): step 1/2. Functionally, catalyzes the deamination of dCTP to dUTP. The polypeptide is dCTP deaminase (Pseudomonas fluorescens (strain Pf0-1)).